The sequence spans 191 residues: Ion-translocating oxidoreductase complex subunit B (191 aa).

Residues 1–26 (MSAVLIAVLALLALCLLGGAILGFAA) are hydrophobic. Residues 32–90 (EGDPIAEQINALLPQTQCGQCGYPGCKPYAEAIAGGDKINKCPPGGEATIQALADLLDV) form the 4Fe-4S domain. [4Fe-4S] cluster-binding residues include cysteine 49, cysteine 52, cysteine 57, cysteine 73, cysteine 114, cysteine 117, cysteine 120, cysteine 124, cysteine 144, cysteine 147, cysteine 150, and cysteine 154. 2 consecutive 4Fe-4S ferredoxin-type domains span residues 105-134 (MVAY…GAAR) and 135-164 (QMHT…MIEV).

This sequence belongs to the 4Fe4S bacterial-type ferredoxin family. RnfB subfamily. The complex is composed of six subunits: RnfA, RnfB, RnfC, RnfD, RnfE and RnfG. [4Fe-4S] cluster is required as a cofactor.

The protein resides in the cell inner membrane. Part of a membrane-bound complex that couples electron transfer with translocation of ions across the membrane. In Stutzerimonas stutzeri (strain A1501) (Pseudomonas stutzeri), this protein is Ion-translocating oxidoreductase complex subunit B.